The sequence spans 196 residues: Large ribosomal subunit protein bL25 (196 aa).

It belongs to the bacterial ribosomal protein bL25 family. CTC subfamily. Part of the 50S ribosomal subunit; part of the 5S rRNA/L5/L18/L25 subcomplex. Contacts the 5S rRNA. Binds to the 5S rRNA independently of L5 and L18.

In terms of biological role, this is one of the proteins that binds to the 5S RNA in the ribosome where it forms part of the central protuberance. In Bacteroides fragilis (strain ATCC 25285 / DSM 2151 / CCUG 4856 / JCM 11019 / LMG 10263 / NCTC 9343 / Onslow / VPI 2553 / EN-2), this protein is Large ribosomal subunit protein bL25.